A 135-amino-acid polypeptide reads, in one-letter code: RxLR effector protein Avr10 (135 aa).

The first 19 residues, 1 to 19 (MRLSFIIFAISLLAGGSGA), serve as a signal peptide directing secretion. The span at 34-43 (GTNQGASTGK) shows a compositional bias: polar residues. Residues 34–64 (GTNQGASTGKRSLRYDNNAERAGEEDDEERA) are disordered. Residues 44-63 (RSLRYDNNAERAGEEDDEER) carry the RxLR-dEER motif. Basic and acidic residues predominate over residues 46–55 (LRYDNNAERA).

The protein belongs to the RxLR effector family.

It localises to the secreted. The protein resides in the host nucleus. The protein localises to the host cytoplasm. In terms of biological role, secreted effector that acts as an elicitor of hypersensitive response (HR) specifically on plants carrying defense protein R10. Enhances P.infestans colonization of Nicotiana benthamiana leaves. This Phytophthora infestans (strain T30-4) (Potato late blight agent) protein is RxLR effector protein Avr10.